Reading from the N-terminus, the 212-residue chain is Protein irg-1 (212 aa).

As to expression, expressed in the intestine.

Plays a role in innate immunity by conferring resistance to virulent strains of the Gram-negative bacterium P.aeruginosa via the zip-2 pathway. Can act independently of several immunity-related pathways including pmk-1 p38MAPK, dbl-1 TGF-beta, kgb-1 JNK and bar-1/beta-catenin pathways. This chain is Protein irg-1, found in Caenorhabditis elegans.